The sequence spans 494 residues: Ketol-acid reductoisomerase (NADP(+)) (494 aa).

Residues leucine 14–serine 208 enclose the KARI N-terminal Rossmann domain. NADP(+) is bound by residues cysteine 45–glutamine 48, arginine 68, arginine 76, serine 78, and aspartate 108–glutamine 110. Histidine 132 is an active-site residue. Residue glycine 158 coordinates NADP(+). KARI C-terminal knotted domains lie at serine 209–valine 344 and threonine 345–methionine 487. 4 residues coordinate Mg(2+): aspartate 217, glutamate 221, glutamate 389, and glutamate 393. Position 414 (serine 414) interacts with substrate.

Belongs to the ketol-acid reductoisomerase family. The cofactor is Mg(2+).

It carries out the reaction (2R)-2,3-dihydroxy-3-methylbutanoate + NADP(+) = (2S)-2-acetolactate + NADPH + H(+). The catalysed reaction is (2R,3R)-2,3-dihydroxy-3-methylpentanoate + NADP(+) = (S)-2-ethyl-2-hydroxy-3-oxobutanoate + NADPH + H(+). Its pathway is amino-acid biosynthesis; L-isoleucine biosynthesis; L-isoleucine from 2-oxobutanoate: step 2/4. The protein operates within amino-acid biosynthesis; L-valine biosynthesis; L-valine from pyruvate: step 2/4. In terms of biological role, involved in the biosynthesis of branched-chain amino acids (BCAA). Catalyzes an alkyl-migration followed by a ketol-acid reduction of (S)-2-acetolactate (S2AL) to yield (R)-2,3-dihydroxy-isovalerate. In the isomerase reaction, S2AL is rearranged via a Mg-dependent methyl migration to produce 3-hydroxy-3-methyl-2-ketobutyrate (HMKB). In the reductase reaction, this 2-ketoacid undergoes a metal-dependent reduction by NADPH to yield (R)-2,3-dihydroxy-isovalerate. This Photobacterium profundum (strain SS9) protein is Ketol-acid reductoisomerase (NADP(+)).